Here is a 1086-residue protein sequence, read N- to C-terminus: Selenocysteine insertion sequence-binding protein 2-like (1086 aa).

5 disordered regions span residues 155 to 207 (GQAF…GPDS), 243 to 386 (AKGR…SESL), 615 to 657 (QEDA…SPMA), 880 to 904 (SDGL…KPSR), and 919 to 1086 (AAGS…PQST). Residues 193-206 (NVATQKETSATGPD) are compositionally biased toward polar residues. At serine 276 the chain carries Phosphoserine. 2 stretches are compositionally biased toward polar residues: residues 294–303 (GTMNRLESSG) and 328–344 (QAFS…NNLQ). Positions 355-370 (SSERRQNLQKRQDNKH) are enriched in basic and acidic residues. The span at 624 to 657 (SDASLSPASQNSPYCMTPVSQGSPASSGIGSPMA) shows a compositional bias: polar residues. Positions 922-931 (SITSAPSQGK) are enriched in polar residues. Basic and acidic residues predominate over residues 933–943 (TGDKDELKPDD). Positions 947-957 (ASQQSTETGSL) are enriched in polar residues. Positions 981 to 994 (LEEEEDEEEEEEDY) are enriched in acidic residues. Residues 1004–1022 (QLNSRIESWVSETQRTMET) are compositionally biased toward polar residues. The segment covering 1032-1046 (SEEDSAEQSGEEAAE) has biased composition (acidic residues).

In terms of biological role, binds SECIS (Sec insertion sequence) elements present on selenocysteine (Sec) protein mRNAs, but does not promote Sec incorporation into selenoproteins. The sequence is that of Selenocysteine insertion sequence-binding protein 2-like (Secisbp2l) from Mus musculus (Mouse).